Consider the following 83-residue polypeptide: NAD(P)H-quinone oxidoreductase subunit L, organellar chromatophore (83 aa).

The next 2 helical transmembrane spans lie at 17-37 (LLLA…LALY) and 53-73 (LFVY…SPFL).

This sequence belongs to the complex I NdhL subunit family. As to quaternary structure, NDH-1 can be composed of about 15 different subunits; different subcomplexes with different compositions have been identified which probably have different functions.

Its subcellular location is the plastid. The protein resides in the organellar chromatophore thylakoid membrane. The catalysed reaction is a plastoquinone + NADH + (n+1) H(+)(in) = a plastoquinol + NAD(+) + n H(+)(out). It catalyses the reaction a plastoquinone + NADPH + (n+1) H(+)(in) = a plastoquinol + NADP(+) + n H(+)(out). NDH-1 shuttles electrons from an unknown electron donor, via FMN and iron-sulfur (Fe-S) centers, to quinones in the respiratory and/or the photosynthetic chain. The immediate electron acceptor for the enzyme in this species is believed to be plastoquinone. Couples the redox reaction to proton translocation, and thus conserves the redox energy in a proton gradient. The sequence is that of NAD(P)H-quinone oxidoreductase subunit L, organellar chromatophore from Paulinella chromatophora.